Consider the following 158-residue polypeptide: RNA pyrophosphohydrolase (158 aa).

Residues 6 to 150 (GYRLNVGIVL…KRDVYRKVMQ (145 aa)) form the Nudix hydrolase domain. The short motif at 39 to 60 (GGINIGETPEQAMYRELFEEIG) is the Nudix box element.

This sequence belongs to the Nudix hydrolase family. RppH subfamily. A divalent metal cation serves as cofactor.

Accelerates the degradation of transcripts by removing pyrophosphate from the 5'-end of triphosphorylated RNA, leading to a more labile monophosphorylated state that can stimulate subsequent ribonuclease cleavage. This is RNA pyrophosphohydrolase from Blochmanniella pennsylvanica (strain BPEN).